The chain runs to 316 residues: Carbamate kinase-like protein YahI (316 aa).

This sequence belongs to the carbamate kinase family.

This Escherichia coli (strain K12) protein is Carbamate kinase-like protein YahI (yahI).